A 334-amino-acid chain; its full sequence is Type II methyltransferase M.NlaIII (334 aa).

Belongs to the N(4)/N(6)-methyltransferase family.

It catalyses the reaction a 2'-deoxyadenosine in DNA + S-adenosyl-L-methionine = an N(6)-methyl-2'-deoxyadenosine in DNA + S-adenosyl-L-homocysteine + H(+). Functionally, a methylase, recognizes the double-stranded sequence 5'-CATG-3', methylates A-2 on both strands and protects the DNA from cleavage by the NlaIII endonuclease. This is Type II methyltransferase M.NlaIII (nlaIIIM) from Neisseria lactamica.